Reading from the N-terminus, the 467-residue chain is 5'-nucleotidase domain-containing protein 1 (467 aa).

Residue Asp16 is the Nucleophile of the active site. Positions 16 and 18 each coordinate Mg(2+). Asp18 (proton donor) is an active-site residue. Lys181 carries the N6-acetyllysine modification. Asp323 contributes to the Mg(2+) binding site.

The protein belongs to the 5'(3')-deoxyribonucleotidase family.

This Mus musculus (Mouse) protein is 5'-nucleotidase domain-containing protein 1 (Nt5dc1).